The following is a 358-amino-acid chain: MTDWADPDALDLSDGETFDSLLDRADTREKGHFFEFFAEGDELAHDPGLRLTHHGSEQWMGQTLNHDPAYWRADTARERDFEERPVHPDYLLACVMGITVEDLSEKGGYFLGRDDVTFHQPVTAGTPLSVTSTVVDTKTSSSRPQYGIVTWETEGRDRETGETLVSYRRTNMIPRREPAATDGGAVGEQDEDGPMLPDTPISPDGEYFEDFQAALERADTENAAVAYRHERGRTMDDQLVAGLPLATLNTARQHHNRDEMADSPSGDIVAYGDVTRSVALAHARSDEATYRERRFADEQFHDFVTLGDTVYGFTRVLDCDPDAGPERAGAVTFEHVAFNQDQTPVYSGRRTALIQRDT.

One can recognise a MaoC-like domain in the interval 44–148; sequence AHDPGLRLTH…TSSSRPQYGI (105 aa).

It belongs to the enoyl-CoA hydratase/isomerase family.

The catalysed reaction is (2R,3S)-beta-methylmalyl-CoA = 2-methylfumaryl-CoA + H2O. Functionally, involved in the methylaspartate cycle. Catalyzes the reversible hydration of mesaconyl-CoA (2-methylfumaryl-CoA) to yield beta-methylmalyl-CoA ((2R,3S)-beta-methylmalyl-CoA). The chain is Mesaconyl-CoA hydratase from Haloarcula marismortui (strain ATCC 43049 / DSM 3752 / JCM 8966 / VKM B-1809) (Halobacterium marismortui).